The primary structure comprises 271 residues: Low choriolytic enzyme (271 aa).

The signal sequence occupies residues 1-20 (MDLLAKASVLLLLLLSLSNA). Positions 21–71 (QTDNMEEAENGSSKEEIDESELEDVSSIIFRMNNNSMEELLEGDLVLPKTR) are cleaved as a propeptide — activation peptide. N-linked (GlcNAc...) asparagine glycosylation is found at asparagine 30 and asparagine 54. The 200-residue stretch at 72-271 (NAMKCFGAPD…ILRVNKLYKC (200 aa)) folds into the Peptidase M12A domain. Cystine bridges form between cysteine 76-cysteine 83, cysteine 123-cysteine 271, and cysteine 144-cysteine 164. Histidine 172 is a binding site for Zn(2+). Glutamate 173 is an active-site residue. The Zn(2+) site is built by histidine 176 and histidine 182. Asparagine 211 carries an N-linked (GlcNAc...) asparagine glycan.

Zn(2+) serves as cofactor.

It is found in the zymogen granule. It catalyses the reaction Hydrolysis of the inner layer of fish egg envelope. Also hydrolysis of casein and small molecule substrates such as succinyl-Leu-Leu-Val-Tyr-|-7-(4-methyl)coumarylamide.. Functionally, participates in the breakdown of the egg envelope, which is derived from the egg extracellular matrix, at the time of hatching. Thus allowing the newly hatched fish to swim free. LCE solubilizes the egg envelope only after it has been swollen by the action of HCE. The protein is Low choriolytic enzyme (lce) of Oryzias latipes (Japanese rice fish).